Reading from the N-terminus, the 591-residue chain is CTP synthase (591 aa).

Residues 1–281 (MPQSRTHSRT…DAYVVRQLGL (281 aa)) form an amidoligase domain region. Position 23 (serine 23) interacts with CTP. Serine 23 is a binding site for UTP. ATP-binding positions include 24–29 (SLGKGL) and aspartate 81. Residues aspartate 81 and glutamate 155 each contribute to the Mg(2+) site. CTP contacts are provided by residues 162–164 (DIE), 202–207 (KTKPTQ), and lysine 238. UTP contacts are provided by residues 202-207 (KTKPTQ) and lysine 238. The 249-residue stretch at 306–554 (RIALVGKYVD…VDAALKHKLE (249 aa)) folds into the Glutamine amidotransferase type-1 domain. Position 369 (glycine 369) interacts with L-glutamine. The active-site Nucleophile; for glutamine hydrolysis is the cysteine 396. L-glutamine-binding positions include 397–400 (LGLQ), glutamate 419, and arginine 480. Catalysis depends on residues histidine 527 and glutamate 529. A disordered region spans residues 568 to 591 (AVATDDELADSADRDEVASVDSAG).

It belongs to the CTP synthase family. Homotetramer.

It catalyses the reaction UTP + L-glutamine + ATP + H2O = CTP + L-glutamate + ADP + phosphate + 2 H(+). The catalysed reaction is L-glutamine + H2O = L-glutamate + NH4(+). The enzyme catalyses UTP + NH4(+) + ATP = CTP + ADP + phosphate + 2 H(+). The protein operates within pyrimidine metabolism; CTP biosynthesis via de novo pathway; CTP from UDP: step 2/2. With respect to regulation, allosterically activated by GTP, when glutamine is the substrate; GTP has no effect on the reaction when ammonia is the substrate. The allosteric effector GTP functions by stabilizing the protein conformation that binds the tetrahedral intermediate(s) formed during glutamine hydrolysis. Inhibited by the product CTP, via allosteric rather than competitive inhibition. Functionally, catalyzes the ATP-dependent amination of UTP to CTP with either L-glutamine or ammonia as the source of nitrogen. Regulates intracellular CTP levels through interactions with the four ribonucleotide triphosphates. This chain is CTP synthase, found in Rhodococcus jostii (strain RHA1).